We begin with the raw amino-acid sequence, 87 residues long: Small ribosomal subunit protein bS20 (87 aa).

The tract at residues 1-26 is disordered; that stretch reads MANTKSALKRIRQTATRTARNRAVTS. Residues 13–23 show a composition bias toward low complexity; it reads QTATRTARNRA.

This sequence belongs to the bacterial ribosomal protein bS20 family.

Binds directly to 16S ribosomal RNA. This is Small ribosomal subunit protein bS20 from Akkermansia muciniphila (strain ATCC BAA-835 / DSM 22959 / JCM 33894 / BCRC 81048 / CCUG 64013 / CIP 107961 / Muc).